The primary structure comprises 163 residues: MIANGSVFKFGDNIDTDVIIPARYLNIADYKELATHCMEDIDDKFISKVKKGDIIVATKNFGCGSSREHAPIVIKESGVSCVIASTFARIFFRNSINIGLPILECEEAANNIDEGDNIEVDFSTGVIKNITKGKEYKAEPFPEFMQNIILNEGLINSIKANRG.

It belongs to the LeuD family. LeuD type 2 subfamily. Heterodimer of LeuC and LeuD.

It catalyses the reaction (2R,3S)-3-isopropylmalate = (2S)-2-isopropylmalate. It functions in the pathway amino-acid biosynthesis; L-leucine biosynthesis; L-leucine from 3-methyl-2-oxobutanoate: step 2/4. Functionally, catalyzes the isomerization between 2-isopropylmalate and 3-isopropylmalate, via the formation of 2-isopropylmaleate. This is 3-isopropylmalate dehydratase small subunit from Clostridioides difficile (strain 630) (Peptoclostridium difficile).